The chain runs to 633 residues: ATP-dependent zinc metalloprotease FtsH (633 aa).

The Cytoplasmic portion of the chain corresponds to 1 to 19 (MTPSNEPGKQDQIPQPGPT). The chain crosses the membrane as a helical span at residues 20-40 (IPNQYSFLWLSAAIFLMFLWL). Residues 41-133 (QGNNQQQQQE…SRSGRPWWQE (93 aa)) lie on the Periplasmic side of the membrane. The helical transmembrane segment at 134 to 154 (LILGFLPWILLLALMFWFWGA) threads the bilayer. Over 155–633 (AQKRMTQGGG…LEEARSRETA (479 aa)) the chain is Cytoplasmic. 226–233 (GPPGTGKT) provides a ligand contact to ATP. Residue His-447 coordinates Zn(2+). Residue Glu-448 is part of the active site. His-451 and Asp-523 together coordinate Zn(2+).

The protein in the central section; belongs to the AAA ATPase family. This sequence in the C-terminal section; belongs to the peptidase M41 family. In terms of assembly, homohexamer. Zn(2+) serves as cofactor.

Its subcellular location is the cell inner membrane. Its function is as follows. Acts as a processive, ATP-dependent zinc metallopeptidase for both cytoplasmic and membrane proteins. Plays a role in the quality control of integral membrane proteins. The chain is ATP-dependent zinc metalloprotease FtsH from Marinobacter nauticus (strain ATCC 700491 / DSM 11845 / VT8) (Marinobacter aquaeolei).